The primary structure comprises 319 residues: Ribosomal protein L11 methyltransferase (319 aa).

Residues T165, G186, D208, and N251 each coordinate S-adenosyl-L-methionine.

This sequence belongs to the methyltransferase superfamily. PrmA family.

The protein localises to the cytoplasm. It catalyses the reaction L-lysyl-[protein] + 3 S-adenosyl-L-methionine = N(6),N(6),N(6)-trimethyl-L-lysyl-[protein] + 3 S-adenosyl-L-homocysteine + 3 H(+). In terms of biological role, methylates ribosomal protein L11. The polypeptide is Ribosomal protein L11 methyltransferase (Limosilactobacillus reuteri subsp. reuteri (strain JCM 1112) (Lactobacillus reuteri)).